A 548-amino-acid chain; its full sequence is Probable malate:quinone oxidoreductase (548 aa).

Positions 521–548 are disordered; the sequence is DKPQAADSTPKPQLKPQPVQKEVADIAL. Residues 530 to 541 show a composition bias toward low complexity; sequence PKPQLKPQPVQK.

Belongs to the MQO family. Requires FAD as cofactor.

The enzyme catalyses (S)-malate + a quinone = a quinol + oxaloacetate. It functions in the pathway carbohydrate metabolism; tricarboxylic acid cycle; oxaloacetate from (S)-malate (quinone route): step 1/1. This chain is Probable malate:quinone oxidoreductase, found in Escherichia coli (strain UTI89 / UPEC).